A 66-amino-acid polypeptide reads, in one-letter code: MKKEIHPEYIDCTVTCACGNTFKTKSNKSEIKIDICDKCHPFFTGSEKIVDSAGRVEKFKKKYALN.

The Zn(2+) site is built by C16, C18, C36, and C39.

Belongs to the bacterial ribosomal protein bL31 family. Type A subfamily. As to quaternary structure, part of the 50S ribosomal subunit. Zn(2+) serves as cofactor.

Functionally, binds the 23S rRNA. The sequence is that of Large ribosomal subunit protein bL31 from Campylobacter curvus (strain 525.92).